Here is a 73-residue protein sequence, read N- to C-terminus: UPF0235 protein HY04AAS1_1378 (73 aa).

It belongs to the UPF0235 family.

This chain is UPF0235 protein HY04AAS1_1378, found in Hydrogenobaculum sp. (strain Y04AAS1).